Here is a 494-residue protein sequence, read N- to C-terminus: Glutamyl-tRNA(Gln) amidotransferase subunit A (494 aa).

Catalysis depends on charge relay system residues Lys-80 and Ser-160. The tract at residues 140 to 168 (GNVISPWRRPGDTAPLAPGGSSGGSSSAV) is disordered. Catalysis depends on Ser-184, which acts as the Acyl-ester intermediate.

This sequence belongs to the amidase family. GatA subfamily. Heterotrimer of A, B and C subunits.

It carries out the reaction L-glutamyl-tRNA(Gln) + L-glutamine + ATP + H2O = L-glutaminyl-tRNA(Gln) + L-glutamate + ADP + phosphate + H(+). Its function is as follows. Allows the formation of correctly charged Gln-tRNA(Gln) through the transamidation of misacylated Glu-tRNA(Gln) in organisms which lack glutaminyl-tRNA synthetase. The reaction takes place in the presence of glutamine and ATP through an activated gamma-phospho-Glu-tRNA(Gln). The protein is Glutamyl-tRNA(Gln) amidotransferase subunit A of Novosphingobium aromaticivorans (strain ATCC 700278 / DSM 12444 / CCUG 56034 / CIP 105152 / NBRC 16084 / F199).